The primary structure comprises 285 residues: Diaminopimelate epimerase (285 aa).

Positions 15 and 68 each coordinate substrate. Cysteine 77 functions as the Proton donor in the catalytic mechanism. Residues 78 to 79 (GN), asparagine 165, asparagine 201, and 219 to 220 (ER) each bind substrate. Catalysis depends on cysteine 228, which acts as the Proton acceptor. Substrate is bound at residue 229–230 (GT).

The protein belongs to the diaminopimelate epimerase family. As to quaternary structure, homodimer.

It localises to the cytoplasm. It catalyses the reaction (2S,6S)-2,6-diaminopimelate = meso-2,6-diaminopimelate. Its pathway is amino-acid biosynthesis; L-lysine biosynthesis via DAP pathway; DL-2,6-diaminopimelate from LL-2,6-diaminopimelate: step 1/1. In terms of biological role, catalyzes the stereoinversion of LL-2,6-diaminopimelate (L,L-DAP) to meso-diaminopimelate (meso-DAP), a precursor of L-lysine and an essential component of the bacterial peptidoglycan. The chain is Diaminopimelate epimerase from Synechococcus sp. (strain JA-2-3B'a(2-13)) (Cyanobacteria bacterium Yellowstone B-Prime).